The chain runs to 602 residues: DEAD-box ATP-dependent RNA helicase 52A (602 aa).

The tract at residues 9–31 (KSVEAGGEPGGGGGGAWSTVSRS) is disordered. A compositionally biased stretch (gly residues) spans 15-24 (GEPGGGGGGA). The short motif at 84 to 112 (DGFEAAGLVEAVLRNVARCGYESPTPVQR) is the Q motif element. The region spanning 115–305 (MPIALAGRDL…SDFLSNYIFI (191 aa)) is the Helicase ATP-binding domain. 128-135 (AQTGSGKT) is an ATP binding site. Residues 249–252 (DEAD) carry the DEAD box motif. The Helicase C-terminal domain maps to 328-485 (EKRGYLLDLL…DVPDWLVQYA (158 aa)). Disordered regions lie at residues 492 to 521 (GSSYGGRNRRSGGGGNRFAGRDFRQGSGGG) and 552 to 602 (RGGG…SGWD). The span at 552 to 574 (RGGGYSRGGRGGYSGGGGGGGGD) shows a compositional bias: gly residues.

This sequence belongs to the DEAD box helicase family. DDX3/DED1 subfamily.

It catalyses the reaction ATP + H2O = ADP + phosphate + H(+). The protein is DEAD-box ATP-dependent RNA helicase 52A of Oryza sativa subsp. japonica (Rice).